A 409-amino-acid polypeptide reads, in one-letter code: Elongation factor Tu (409 aa).

The 205-residue stretch at 10–214 folds into the tr-type G domain; that stretch reads KPHVNIGTIG…AVDAYIPTPE (205 aa). Positions 19–26 are G1; that stretch reads GHVDHGKT. 19 to 26 is a GTP binding site; sequence GHVDHGKT. T26 provides a ligand contact to Mg(2+). The segment at 60 to 64 is G2; it reads GITIN. The interval 81–84 is G3; it reads DCPG. GTP is bound by residues 81–85 and 136–139; these read DCPGH and NKKD. The segment at 136–139 is G4; it reads NKKD. Residues 174–176 form a G5 region; the sequence is SAL.

The protein belongs to the TRAFAC class translation factor GTPase superfamily. Classic translation factor GTPase family. EF-Tu/EF-1A subfamily. As to quaternary structure, monomer.

It is found in the cytoplasm. It catalyses the reaction GTP + H2O = GDP + phosphate + H(+). GTP hydrolase that promotes the GTP-dependent binding of aminoacyl-tRNA to the A-site of ribosomes during protein biosynthesis. The sequence is that of Elongation factor Tu from Gloeobacter violaceus (strain ATCC 29082 / PCC 7421).